We begin with the raw amino-acid sequence, 471 residues long: Histidinol dehydrogenase (471 aa).

Residues tyrosine 139, glutamine 204, and asparagine 236 each contribute to the NAD(+) site. Substrate-binding residues include threonine 259, glutamine 281, and histidine 284. Zn(2+) contacts are provided by glutamine 281 and histidine 284. Residues glutamate 350 and histidine 351 each act as proton acceptor in the active site. Residues histidine 351, aspartate 384, glutamate 438, and histidine 443 each contribute to the substrate site. A Zn(2+)-binding site is contributed by aspartate 384. Histidine 443 lines the Zn(2+) pocket.

Belongs to the histidinol dehydrogenase family. Requires Zn(2+) as cofactor.

The catalysed reaction is L-histidinol + 2 NAD(+) + H2O = L-histidine + 2 NADH + 3 H(+). Its pathway is amino-acid biosynthesis; L-histidine biosynthesis; L-histidine from 5-phospho-alpha-D-ribose 1-diphosphate: step 9/9. Its function is as follows. Catalyzes the sequential NAD-dependent oxidations of L-histidinol to L-histidinaldehyde and then to L-histidine. This chain is Histidinol dehydrogenase, found in Bifidobacterium longum (strain NCC 2705).